The chain runs to 234 residues: 2-C-methyl-D-erythritol 4-phosphate cytidylyltransferase (234 aa).

It belongs to the IspD/TarI cytidylyltransferase family. IspD subfamily.

It catalyses the reaction 2-C-methyl-D-erythritol 4-phosphate + CTP + H(+) = 4-CDP-2-C-methyl-D-erythritol + diphosphate. It participates in isoprenoid biosynthesis; isopentenyl diphosphate biosynthesis via DXP pathway; isopentenyl diphosphate from 1-deoxy-D-xylulose 5-phosphate: step 2/6. Its function is as follows. Catalyzes the formation of 4-diphosphocytidyl-2-C-methyl-D-erythritol from CTP and 2-C-methyl-D-erythritol 4-phosphate (MEP). In Thermosynechococcus vestitus (strain NIES-2133 / IAM M-273 / BP-1), this protein is 2-C-methyl-D-erythritol 4-phosphate cytidylyltransferase.